Consider the following 611-residue polypeptide: Zinc metalloproteinase-disintegrin-like MTP9 (611 aa).

An N-terminal signal peptide occupies residues 1 to 20 (MIEVLLVTICFTVFPYQGSS). Positions 21–191 (IILESGNVND…DEPIEKISQL (171 aa)) are excised as a propeptide. A Peptidase M12B domain is found at 205–401 (KYIELYVVVD…VRPQCILNKP (197 aa)). Glu208 contributes to the Ca(2+) binding site. Asn282 carries N-linked (GlcNAc...) asparagine glycosylation. Residue Asp292 coordinates Ca(2+). 3 cysteine pairs are disulfide-bonded: Cys316/Cys396, Cys356/Cys380, and Cys358/Cys363. His341, His345, and His351 together coordinate Zn(2+). Ca(2+) is bound by residues Cys396, Asn399, Asn414, Phe416, Glu418, Glu421, and Asp424. The region spanning 409 to 493 (PPVCGNYFVE…ECPTDSFQRN (85 aa)) is the Disintegrin domain. Intrachain disulfides connect Cys412/Cys441, Cys423/Cys436, Cys425/Cys431, Cys435/Cys456, Cys447/Cys453, Cys452/Cys478, Cys465/Cys485, Cys472/Cys504, Cys497/Cys509, Cys516/Cys566, Cys531/Cys573, Cys541/Cys575, Cys544/Cys554, Cys561/Cys599, and Cys593/Cys604. Residues 471–473 (DCD) carry the D/ECD-tripeptide motif. The Ca(2+) site is built by Asp473, Leu474, Glu476, and Asp488. Asn548 and Asn570 each carry an N-linked (GlcNAc...) asparagine glycan.

This sequence belongs to the venom metalloproteinase (M12B) family. P-III subfamily. As to quaternary structure, monomer. Requires Zn(2+) as cofactor. As to expression, expressed by the venom gland.

The protein localises to the secreted. Functionally, snake venom zinc metalloproteinase that may impair hemostasis in the prey. In Drysdalia coronoides (White-lipped snake), this protein is Zinc metalloproteinase-disintegrin-like MTP9.